The chain runs to 322 residues: Probable F-box protein At1g60180 (322 aa).

The 44-residue stretch at Phe45–Leu88 folds into the F-box domain.

This is Probable F-box protein At1g60180 from Arabidopsis thaliana (Mouse-ear cress).